We begin with the raw amino-acid sequence, 190 residues long: Probable gluconokinase (190 aa).

An ATP-binding site is contributed by 7–14 (GVSGSGKT).

This sequence belongs to the gluconokinase GntK/GntV family.

It catalyses the reaction D-gluconate + ATP = 6-phospho-D-gluconate + ADP + H(+). The protein operates within carbohydrate acid metabolism; D-gluconate degradation. This chain is Probable gluconokinase (idnk), found in Xenopus tropicalis (Western clawed frog).